The chain runs to 359 residues: Peptide chain release factor 1 (359 aa).

Residue Gln-233 is modified to N5-methylglutamine.

This sequence belongs to the prokaryotic/mitochondrial release factor family. Post-translationally, methylated by PrmC. Methylation increases the termination efficiency of RF1.

It is found in the cytoplasm. In terms of biological role, peptide chain release factor 1 directs the termination of translation in response to the peptide chain termination codons UAG and UAA. This chain is Peptide chain release factor 1, found in Orientia tsutsugamushi (strain Ikeda) (Rickettsia tsutsugamushi).